Here is a 376-residue protein sequence, read N- to C-terminus: uncharacterized protein (376 aa).

This sequence belongs to the mimivirus R1 family.

This is an uncharacterized protein from Acanthamoeba polyphaga (Amoeba).